A 428-amino-acid polypeptide reads, in one-letter code: Dihydroorotase (428 aa).

Zn(2+) contacts are provided by His60 and His62. Substrate contacts are provided by residues 62–64 and Asn94; that span reads HLR. Zn(2+) is bound by residues Asp152, His179, and His232. Residue Asn278 coordinates substrate. Asp305 contributes to the Zn(2+) binding site. Asp305 is a catalytic residue. Residues His309 and 323-324 each bind substrate; that span reads FG.

The protein belongs to the metallo-dependent hydrolases superfamily. DHOase family. Class I DHOase subfamily. Zn(2+) is required as a cofactor.

The catalysed reaction is (S)-dihydroorotate + H2O = N-carbamoyl-L-aspartate + H(+). The protein operates within pyrimidine metabolism; UMP biosynthesis via de novo pathway; (S)-dihydroorotate from bicarbonate: step 3/3. Functionally, catalyzes the reversible cyclization of carbamoyl aspartate to dihydroorotate. The polypeptide is Dihydroorotase (Anoxybacillus flavithermus (strain DSM 21510 / WK1)).